Here is a 141-residue protein sequence, read N- to C-terminus: Hemoglobin subunit alpha-D (141 aa).

One can recognise a Globin domain in the interval 1–141 (MLTADDKKLL…VAAVLAEKYR (141 aa)). Positions 58 and 87 each coordinate heme b.

This sequence belongs to the globin family. Heterotetramer of two alpha-D chains and two beta chains. In terms of tissue distribution, red blood cells.

Involved in oxygen transport from the lung to the various peripheral tissues. The sequence is that of Hemoglobin subunit alpha-D (HBAD) from Chloephaga melanoptera (Andean goose).